The chain runs to 113 residues: Thioredoxin H-type (113 aa).

Residues 2–112 (GGSVIVIDSK…LKALVAKHAA (111 aa)) enclose the Thioredoxin domain. Catalysis depends on nucleophile residues Cys37 and Cys40. A disulfide bond links Cys37 and Cys40.

The protein belongs to the thioredoxin family. Plant H-type subfamily.

The protein resides in the cytoplasm. Its function is as follows. Participates in various redox reactions through the reversible oxidation of the active center dithiol to a disulfide. The H form is known to activate a number of cytosolic enzymes. This Chlamydomonas reinhardtii (Chlamydomonas smithii) protein is Thioredoxin H-type (TRXH).